A 72-amino-acid chain; its full sequence is Potassium channel toxin kappa-KTx 5.1 (72 aa).

The N-terminal stretch at 1–23 (MKLLPLLFVILIVCAILPDEASC) is a signal peptide. The propeptide occupies 24–43 (DQSELERKEENFKDESREIV). Intrachain disulfides connect cysteine 47-cysteine 64 and cysteine 51-cysteine 60. At histidine 70 the chain carries Histidine amide.

Belongs to the short scorpion toxin superfamily. Potassium channel inhibitor kappa-KTx family. Kappa-KTx 5 subfamily. As to expression, expressed by the venom gland.

The protein resides in the secreted. Its function is as follows. Weak blocker of potassium channels Kv1.1/KCNA1 (IC(50)=578.5 nM-9.9 uM) and Kv1.6/KCNA6 (~60% block at 30 uM of toxin). Acts by binding to the pore and occluding it. Has a voltage-dependent mode of action, which can be explained by a high content of basic residues causing repulsions at higher membrane voltages. Shows a weak interaction with muscle-type nicotinic acetylcholine receptors (nAChR), since it inhibits alpha-bungarotoxin binding to muscle-type nAChR from T.californica (IC(50)=1.4 uM). This suggests it probably weakly inhibits muscle nAChR. The mode of binding to potassium channels of this toxin differs from its homologs (including HefuTx1), since it lacks the key aromatic residue of the functional dyad. In contrast, its functionally important site is composed of a number of basic residues. The sequence is that of Potassium channel toxin kappa-KTx 5.1 from Heterometrus laoticus (Thai giant scorpion).